A 384-amino-acid chain; its full sequence is Cell division protein FtsZ (384 aa).

GTP contacts are provided by residues 20-24, 107-109, Glu-138, Arg-142, and Asn-186; these read GGGSN and GTG.

The protein belongs to the FtsZ family. Homodimer. Polymerizes to form a dynamic ring structure in a strictly GTP-dependent manner. Interacts directly with several other division proteins.

It is found in the cytoplasm. In terms of biological role, essential cell division protein that forms a contractile ring structure (Z ring) at the future cell division site. The regulation of the ring assembly controls the timing and the location of cell division. One of the functions of the FtsZ ring is to recruit other cell division proteins to the septum to produce a new cell wall between the dividing cells. Binds GTP and shows GTPase activity. This is Cell division protein FtsZ from Buchnera aphidicola subsp. Acyrthosiphon pisum (strain APS) (Acyrthosiphon pisum symbiotic bacterium).